Here is a 360-residue protein sequence, read N- to C-terminus: Phosphoserine aminotransferase (360 aa).

Arginine 42 serves as a coordination point for L-glutamate. Pyridoxal 5'-phosphate contacts are provided by residues 76-77, tryptophan 102, threonine 152, aspartate 172, and glutamine 195; that span reads AS. An N6-(pyridoxal phosphate)lysine modification is found at lysine 196. 237-238 contacts pyridoxal 5'-phosphate; sequence NT.

This sequence belongs to the class-V pyridoxal-phosphate-dependent aminotransferase family. SerC subfamily. As to quaternary structure, homodimer. Pyridoxal 5'-phosphate is required as a cofactor.

Its subcellular location is the cytoplasm. The catalysed reaction is O-phospho-L-serine + 2-oxoglutarate = 3-phosphooxypyruvate + L-glutamate. It catalyses the reaction 4-(phosphooxy)-L-threonine + 2-oxoglutarate = (R)-3-hydroxy-2-oxo-4-phosphooxybutanoate + L-glutamate. It functions in the pathway amino-acid biosynthesis; L-serine biosynthesis; L-serine from 3-phospho-D-glycerate: step 2/3. In terms of biological role, catalyzes the reversible conversion of 3-phosphohydroxypyruvate to phosphoserine and of 3-hydroxy-2-oxo-4-phosphonooxybutanoate to phosphohydroxythreonine. The polypeptide is Phosphoserine aminotransferase (Bacillus cereus (strain ATCC 14579 / DSM 31 / CCUG 7414 / JCM 2152 / NBRC 15305 / NCIMB 9373 / NCTC 2599 / NRRL B-3711)).